A 155-amino-acid polypeptide reads, in one-letter code: MVILGIDPGLARVGYGLIEVNNQRQVKMLDCGIIKTNKNQYEGERMVEIAKDLRVLIRKWKPGLAAVEKFFFYKSSTTISVVQARGVLIMTLARFKVPIVEFPPMQIKLAVAGSGHAKKDEVLEAVMRELRLKVPPRPDDAADALAIALTGLFQQ.

Residues Asp7, Glu68, and Asp140 contribute to the active site. The Mg(2+) site is built by Asp7, Glu68, and Asp140.

Belongs to the RuvC family. In terms of assembly, homodimer which binds Holliday junction (HJ) DNA. The HJ becomes 2-fold symmetrical on binding to RuvC with unstacked arms; it has a different conformation from HJ DNA in complex with RuvA. In the full resolvosome a probable DNA-RuvA(4)-RuvB(12)-RuvC(2) complex forms which resolves the HJ. Requires Mg(2+) as cofactor.

It is found in the cytoplasm. The catalysed reaction is Endonucleolytic cleavage at a junction such as a reciprocal single-stranded crossover between two homologous DNA duplexes (Holliday junction).. In terms of biological role, the RuvA-RuvB-RuvC complex processes Holliday junction (HJ) DNA during genetic recombination and DNA repair. Endonuclease that resolves HJ intermediates. Cleaves cruciform DNA by making single-stranded nicks across the HJ at symmetrical positions within the homologous arms, yielding a 5'-phosphate and a 3'-hydroxyl group; requires a central core of homology in the junction. The consensus cleavage sequence is 5'-(A/T)TT(C/G)-3'. Cleavage occurs on the 3'-side of the TT dinucleotide at the point of strand exchange. HJ branch migration catalyzed by RuvA-RuvB allows RuvC to scan DNA until it finds its consensus sequence, where it cleaves and resolves the cruciform DNA. The chain is Crossover junction endodeoxyribonuclease RuvC from Prochlorococcus marinus (strain SARG / CCMP1375 / SS120).